A 117-amino-acid polypeptide reads, in one-letter code: Appetite-regulating hormone (117 aa).

A signal peptide spans 1–23 (MVSSATICSLLLLSMLWMDMAMA). Serine 26 carries O-decanoyl serine; alternate lipidation. A lipid anchor (O-hexanoyl serine; alternate) is attached at serine 26. Serine 26 carries the O-octanoyl serine; alternate lipid modification. A disordered region spans residues 28–68 (LSPEHQKAQQRKESKKPPAKLQPRALEGWLHPEDRGQAEEA). Basic and acidic residues predominate over residues 31–43 (EHQKAQQRKESKK). Residues 52-75 (ALEGWLHPEDRGQAEEAEEELEIR) constitute a propeptide, removed in mature form. Leucine 98 is modified (leucine amide). Positions 99–117 (GKFLQDILWEEVKEAPANK) are cleaved as a propeptide — removed in mature form.

The protein belongs to the motilin family. Post-translationally, O-octanoylated by GOAT/MBOAT4. O-octanoylation is essential for ghrelin activity. The replacement of Ser-26 by aromatic tryptophan preserves ghrelin activity. Amidation of Leu-98 is essential for obestatin activity. In terms of tissue distribution, ghrelin is broadly expressed with higher expression in the stomach. Very low levels are detected in the hypothalamus, heart, lung, pancreas, intestine and adipose tissue. Obestatin is most highly expressed in jejunum, and also found in duodenum, stomach, pituitary, ileum, liver, hypothalamus and heart. Expressed in low levels in pancreas, cerebellum, cerebrum, kidney, testis, ovary colon and lung.

It localises to the secreted. Functionally, ghrelin is the ligand for growth hormone secretagogue receptor type 1 (GHSR). Induces the release of growth hormone from the pituitary. Has an appetite-stimulating effect, induces adiposity and stimulates gastric acid secretion. Involved in growth regulation. Obestatin may be the ligand for GPR39. May have an appetite-reducing effect resulting in decreased food intake. May reduce gastric emptying activity and jejunal motility. This Rattus norvegicus (Rat) protein is Appetite-regulating hormone (Ghrl).